We begin with the raw amino-acid sequence, 657 residues long: uncharacterized protein (657 aa).

Position 114 is a phosphoserine (S114). Disordered regions lie at residues 142 to 216, 228 to 248, 291 to 312, 335 to 354, and 399 to 522; these read LASQ…SDEE, SSREKNTNQGFSSANVSEEEE, STRSRADYPQSHVSSDTASHTP, SSPGRSEAETVDEPVSEGAD, and AEAS…SGRH. Residues 143 to 169 show a composition bias toward polar residues; that stretch reads ASQNTDKTSQNQARELPVTENNAQNAK. Basic and acidic residues predominate over residues 190–206; that stretch reads AGKERTLQTPKQKEPAR. S213 is modified (phosphoserine). Polar residues-rich tracts occupy residues 234 to 243 and 301 to 312; these read TNQGFSSANV and SHVSSDTASHTP. Acidic residues predominate over residues 343 to 354; that stretch reads ETVDEPVSEGAD. The span at 437 to 451 shows a compositional bias: low complexity; the sequence is SASSASAIQQDSTSS. The span at 462-484 shows a compositional bias: polar residues; sequence NTVSSAYSEDFENSPSLTASEPT. Residues 485 to 495 show a composition bias toward basic and acidic residues; sequence AHSKESLDRTL. A compositionally biased stretch (polar residues) spans 499-513; sequence SESSSSVKTDLPQTA.

This is an uncharacterized protein from Homo sapiens (Human).